We begin with the raw amino-acid sequence, 276 residues long: Dermonecrotic toxin LlSicTox-alphaIV3 (276 aa).

The active site involves His-5. The Mg(2+) site is built by Glu-25 and Asp-27. The Nucleophile role is filled by His-41. 2 disulfides stabilise this stretch: Cys-45/Cys-51 and Cys-47/Cys-192. Asp-85 is a binding site for Mg(2+).

The protein belongs to the arthropod phospholipase D family. Class II subfamily. The cofactor is Mg(2+). As to expression, expressed by the venom gland.

It localises to the secreted. It carries out the reaction an N-(acyl)-sphingosylphosphocholine = an N-(acyl)-sphingosyl-1,3-cyclic phosphate + choline. The enzyme catalyses an N-(acyl)-sphingosylphosphoethanolamine = an N-(acyl)-sphingosyl-1,3-cyclic phosphate + ethanolamine. It catalyses the reaction a 1-acyl-sn-glycero-3-phosphocholine = a 1-acyl-sn-glycero-2,3-cyclic phosphate + choline. The catalysed reaction is a 1-acyl-sn-glycero-3-phosphoethanolamine = a 1-acyl-sn-glycero-2,3-cyclic phosphate + ethanolamine. Its function is as follows. Dermonecrotic toxins cleave the phosphodiester linkage between the phosphate and headgroup of certain phospholipids (sphingolipid and lysolipid substrates), forming an alcohol (often choline) and a cyclic phosphate. This toxin acts on sphingomyelin (SM). It may also act on ceramide phosphoethanolamine (CPE), lysophosphatidylcholine (LPC) and lysophosphatidylethanolamine (LPE), but not on lysophosphatidylserine (LPS), and lysophosphatidylglycerol (LPG). It acts by transphosphatidylation, releasing exclusively cyclic phosphate products as second products. Induces dermonecrosis, hemolysis, increased vascular permeability, edema, inflammatory response, and platelet aggregation. The sequence is that of Dermonecrotic toxin LlSicTox-alphaIV3 from Loxosceles laeta (South American recluse spider).